The primary structure comprises 162 residues: Probable chemoreceptor glutamine deamidase CheD 2 (162 aa).

The protein belongs to the CheD family.

It catalyses the reaction L-glutaminyl-[protein] + H2O = L-glutamyl-[protein] + NH4(+). Probably deamidates glutamine residues to glutamate on methyl-accepting chemotaxis receptors (MCPs), playing an important role in chemotaxis. This is Probable chemoreceptor glutamine deamidase CheD 2 from Geobacter metallireducens (strain ATCC 53774 / DSM 7210 / GS-15).